We begin with the raw amino-acid sequence, 430 residues long: MDERLLGPPPPGGGRGGLGLVGAEPGGPGEPPGGGDPGGGSGGVPGGRGKQDIGDILQQIMTITDQSLDEAQAKKHALNCHRMKPALFSVLCEIKEKTGLSIRSSQEEEPVDPQLMRLDNMLLAEGVAGPEKGGGSAAAAAAAAASGGGVSPDNSIEHSDYRSKLAQIRHIYHSELEKYEQACNEFTTHVMNLLREQSRTRPVAPKEMERMVSIIHRKFSAIQMQLKQSTCEAVMILRSRFLDARRKRRNFSKQATEVLNEYFYSHLSNPYPSEEAKEELAKKCGITVSQVSNWFGNKRIRYKKNIGKFQEEANIYAVKTAVSVAQGGHSRTSSPTPPSSAGSGGSFNLSGSGDMFLGMPGLNGDSYPASQVESLRHSMGPGSYGDNIGGGQIYSPREIRANGGWQEAVTPSSVTSPTEGPGSVHSDTSN.

Residues 1–52 are disordered; the sequence is MDERLLGPPPPGGGRGGLGLVGAEPGGPGEPPGGGDPGGGSGGVPGGRGKQD. Over residues 13-48 the composition is skewed to gly residues; that stretch reads GGRGGLGLVGAEPGGPGEPPGGGDPGGGSGGVPGGR. Residues 48-243 form the PBC domain; that stretch reads RGKQDIGDIL…VMILRSRFLD (196 aa). The interval 55 to 134 is PBC-A; it reads DILQQIMTIT…EGVAGPEKGG (80 aa). S136, S151, and S159 each carry phosphoserine. Residues 137 to 243 are PBC-B; that stretch reads AAAAAAAAAS…VMILRSRFLD (107 aa). A DNA-binding region (homeobox; TALE-type) is located at residues 244–306; that stretch reads ARRKRRNFSK…NKRIRYKKNI (63 aa). Disordered stretches follow at residues 327–347 and 375–430; these read GGHSRTSSPTPPSSAGSGGSF and LRHS…DTSN. 2 positions are modified to phosphoserine: S330 and S395. Positions 409-418 are enriched in polar residues; that stretch reads VTPSSVTSPT.

The protein belongs to the TALE/PBX homeobox family. As to quaternary structure, forms heterodimers with MEIS1 and heterotrimers with MEIS1 and HOXA9. Interacts with PBXIP1.

The protein resides in the nucleus. Functionally, transcriptional activator that binds the sequence 5'-ATCAATCAA-3'. Activates transcription of PF4 in complex with MEIS1. This chain is Pre-B-cell leukemia transcription factor 2 (Pbx2), found in Mus musculus (Mouse).